A 192-amino-acid polypeptide reads, in one-letter code: Chromophore lyase CpcS/CpeS 2 (192 aa).

This sequence belongs to the CpcS/CpeS biliprotein lyase family.

Covalently attaches a chromophore to Cys residue(s) of phycobiliproteins. In Synechocystis sp. (strain ATCC 27184 / PCC 6803 / Kazusa), this protein is Chromophore lyase CpcS/CpeS 2.